The chain runs to 175 residues: Zinc metalloproteinase-disintegrin-like catroriarin (175 aa).

Positions N1–N63 constitute a Disintegrin domain. Cystine bridges form between C3/C26, C17/C23, C22/C48, C35/C55, C42/C74, C67/C79, C101/C147, C114/C124, and C131/C171. The short motif at E41–D43 is the D/ECD-tripeptide element. 5 residues coordinate Ca(2+): D43, P44, E46, D58, and V59.

Belongs to the venom metalloproteinase (M12B) family. P-III subfamily. P-IIIa sub-subfamily. As to quaternary structure, monomer. It depends on Zn(2+) as a cofactor. Post-translationally, glycosylated. As to expression, expressed by the venom gland.

Its subcellular location is the secreted. In terms of biological role, snake venom metalloproteinase that impairs hemostasis in the envenomed animal. In Crotalus atrox (Western diamondback rattlesnake), this protein is Zinc metalloproteinase-disintegrin-like catroriarin.